The chain runs to 936 residues: Altered inheritance of mitochondria protein 3 (936 aa).

4 disordered regions span residues 1 to 315 (MGFW…LNQN), 341 to 795 (MSST…EATG), 818 to 893 (NLEK…KSLE), and 908 to 936 (SAAD…HKLK). Over residues 36 to 54 (ASKKHYNNSKARRERKSGK) the composition is skewed to basic residues. Phosphoserine occurs at positions 57, 58, and 64. Over residues 59-68 (DEEYESEDEM) the composition is skewed to acidic residues. A compositionally biased stretch (basic and acidic residues) spans 69–84 (EHERKPTDIRSLKDPK). Composition is skewed to low complexity over residues 93 to 105 (PGQK…QQQQ) and 130 to 152 (QSQY…GVMP). The segment covering 166–244 (GSNSNATSYQ…YVSHGSTNLG (79 aa)) has biased composition (polar residues). Low complexity-rich tracts occupy residues 245–267 (QSQF…VLPS) and 306–315 (QQQQQPLNQN). Polar residues predominate over residues 341 to 354 (MSSTTNMQDSNPSY). Residues 366-382 (GGQPPVPVRMQPQPPQP) show a composition bias toward pro residues. Over residues 453–462 (IQPNTTSSAA) the composition is skewed to polar residues. Serine 463 carries the post-translational modification Phosphoserine. Composition is skewed to basic and acidic residues over residues 475–489 (DNER…DEST), 513–528 (HGLD…KNAS), and 598–615 (EIKD…DRNV). Low complexity-rich tracts occupy residues 622 to 632 (QSKSQSQSQSQ) and 656 to 665 (SQSSNSSDSS). The residue at position 718 (threonine 718) is a Phosphothreonine. A compositionally biased stretch (basic and acidic residues) spans 738 to 748 (DSSKDANKYEK). Residues 752–763 (PVTSSIQAQQST) are compositionally biased toward polar residues. Position 850 is a phosphothreonine (threonine 850). Over residues 851–868 (PPRPPPSRSSPKKVPPVV) the composition is skewed to pro residues. Residues 877–888 (KKPPVVPKKKPL) show a composition bias toward basic residues.

The protein belongs to the AIM3 family. As to quaternary structure, interacts with RVS167.

The protein resides in the membrane raft. This Saccharomyces cerevisiae (strain RM11-1a) (Baker's yeast) protein is Altered inheritance of mitochondria protein 3 (AIM3).